The sequence spans 600 residues: Threonine dehydratase, mitochondrial (600 aa).

Residue Lys144 is modified to N6-(pyridoxal phosphate)lysine. 2 consecutive ACT-like domains span residues Val425 to Asp497 and Arg519 to Asn590.

This sequence belongs to the serine/threonine dehydratase family. Homotetramer. Requires pyridoxal 5'-phosphate as cofactor.

The protein localises to the mitochondrion. It is found in the cytoplasm. The catalysed reaction is L-threonine = 2-oxobutanoate + NH4(+). Its pathway is amino-acid biosynthesis; L-isoleucine biosynthesis; 2-oxobutanoate from L-threonine: step 1/1. With respect to regulation, isoleucine allosterically inhibits while valine allosterically activates this enzyme. The chain is Threonine dehydratase, mitochondrial from Schizosaccharomyces pombe (strain 972 / ATCC 24843) (Fission yeast).